Reading from the N-terminus, the 431-residue chain is Tol-Pal system protein TolB (431 aa).

Residues 1 to 26 (MRLMTKLGFRALVASCLIAAGAAANA) form the signal peptide. Residues 411-431 (PQILSVQGGSVREPSWGPFMQ) form a disordered region.

The protein belongs to the TolB family. In terms of assembly, the Tol-Pal system is composed of five core proteins: the inner membrane proteins TolA, TolQ and TolR, the periplasmic protein TolB and the outer membrane protein Pal. They form a network linking the inner and outer membranes and the peptidoglycan layer.

The protein localises to the periplasm. Functionally, part of the Tol-Pal system, which plays a role in outer membrane invagination during cell division and is important for maintaining outer membrane integrity. The protein is Tol-Pal system protein TolB of Burkholderia ambifaria (strain ATCC BAA-244 / DSM 16087 / CCUG 44356 / LMG 19182 / AMMD) (Burkholderia cepacia (strain AMMD)).